A 72-amino-acid chain; its full sequence is Translation initiation factor IF-1 (72 aa).

The 72-residue stretch at 1–72 (MAKEGNIEME…SKGRIVYRAR (72 aa)) folds into the S1-like domain.

It belongs to the IF-1 family. Component of the 30S ribosomal translation pre-initiation complex which assembles on the 30S ribosome in the order IF-2 and IF-3, IF-1 and N-formylmethionyl-tRNA(fMet); mRNA recruitment can occur at any time during PIC assembly.

It localises to the cytoplasm. Functionally, one of the essential components for the initiation of protein synthesis. Stabilizes the binding of IF-2 and IF-3 on the 30S subunit to which N-formylmethionyl-tRNA(fMet) subsequently binds. Helps modulate mRNA selection, yielding the 30S pre-initiation complex (PIC). Upon addition of the 50S ribosomal subunit IF-1, IF-2 and IF-3 are released leaving the mature 70S translation initiation complex. In Hahella chejuensis (strain KCTC 2396), this protein is Translation initiation factor IF-1.